Here is a 446-residue protein sequence, read N- to C-terminus: Glutamine synthetase (446 aa).

The GS beta-grasp domain maps to 15-102; the sequence is RDIRFVRLWF…MFCDITMPDG (88 aa). The 338-residue stretch at 109 to 446 folds into the GS catalytic domain; the sequence is PRHVLRRQLT…PYELRTYLSL (338 aa). Mg(2+) is bound by residues E132 and E134. An ATP-binding site is contributed by E184. Mg(2+) contacts are provided by E189 and E196. G241 contributes to the L-glutamate binding site. H245 provides a ligand contact to Mg(2+). ATP is bound by residues 247–249 and S249; that span reads HMS. L-glutamate is bound by residues R298, E304, and R316. ATP is bound by residues R316 and R321. E336 serves as a coordination point for Mg(2+). Residue R338 coordinates L-glutamate.

Belongs to the glutamine synthetase family. As to quaternary structure, oligomer of 12 subunits arranged in the form of two hexagons. In its feedback-inhibited form, interacts with TnrA in order to block its DNA-binding activity. Mg(2+) serves as cofactor.

The protein resides in the cytoplasm. The enzyme catalyses L-glutamate + NH4(+) + ATP = L-glutamine + ADP + phosphate + H(+). Inhibited by glutamine. Functionally, glutamine synthetase (GS) is an unusual multitasking protein that functions as an enzyme, a transcription coregulator, and a chaperone in ammonium assimilation and in the regulation of genes involved in nitrogen metabolism. It catalyzes the ATP-dependent biosynthesis of glutamine from glutamate and ammonia. Feedback-inhibited GlnA also interacts with and regulates the activity of the transcriptional regulator TnrA. During nitrogen limitation, TnrA is in its DNA-binding active state and turns on the transcription of genes required for nitrogen assimilation. Under conditions of nitrogen excess, feedback-inhibited GlnA forms a stable complex with TnrA, which inhibits its DNA-binding activity. In contrast, feedback-inhibited GlnA acts as a chaperone to stabilize the DNA-binding activity of GlnR, which represses the transcription of nitrogen assimilation genes. The protein is Glutamine synthetase of Mycobacterium bovis (strain ATCC BAA-935 / AF2122/97).